We begin with the raw amino-acid sequence, 98 residues long: DNA-binding protein Fis (98 aa).

The segment at residues glutamine 74–lysine 93 is a DNA-binding region (H-T-H motif).

Belongs to the transcriptional regulatory Fis family. Homodimer.

Functionally, activates ribosomal RNA transcription. Plays a direct role in upstream activation of rRNA promoters. In Histophilus somni (strain 2336) (Haemophilus somnus), this protein is DNA-binding protein Fis.